The primary structure comprises 618 residues: DNA mismatch repair protein MutL (618 aa).

The span at 366 to 381 (AEPTAAREPATPRYSG) shows a compositional bias: low complexity. The tract at residues 366 to 403 (AEPTAAREPATPRYSGGASGGNGGRQSAGGWPHAQPGY) is disordered. A compositionally biased stretch (gly residues) spans 382 to 392 (GASGGNGGRQS).

Belongs to the DNA mismatch repair MutL/HexB family.

Its function is as follows. This protein is involved in the repair of mismatches in DNA. It is required for dam-dependent methyl-directed DNA mismatch repair. May act as a 'molecular matchmaker', a protein that promotes the formation of a stable complex between two or more DNA-binding proteins in an ATP-dependent manner without itself being part of a final effector complex. In Salmonella schwarzengrund (strain CVM19633), this protein is DNA mismatch repair protein MutL.